Reading from the N-terminus, the 574-residue chain is Septation ring formation regulator EzrA (574 aa).

Residues 1-7 (MSSGIIL) lie on the Extracellular side of the membrane. The helical transmembrane segment at 8-26 (LIVAIVLLVIIAYLVGVII) threads the bilayer. At 27–574 (RKRNDSLITS…YEKTREHIRF (548 aa)) the chain is on the cytoplasmic side. 3 coiled-coil regions span residues 102–141 (NFIR…EEKN), 274–350 (ELVT…ETES), and 459–520 (QLEA…SFEA).

It belongs to the EzrA family.

It is found in the cell membrane. Its function is as follows. Negative regulator of FtsZ ring formation; modulates the frequency and position of FtsZ ring formation. Inhibits FtsZ ring formation at polar sites. Interacts either with FtsZ or with one of its binding partners to promote depolymerization. This Streptococcus pyogenes serotype M3 (strain SSI-1) protein is Septation ring formation regulator EzrA.